Consider the following 192-residue polypeptide: Crossover junction endodeoxyribonuclease RuvC (192 aa).

Residues Asp8, Glu67, and Asp139 contribute to the active site. 3 residues coordinate Mg(2+): Asp8, Glu67, and Asp139.

It belongs to the RuvC family. As to quaternary structure, homodimer which binds Holliday junction (HJ) DNA. The HJ becomes 2-fold symmetrical on binding to RuvC with unstacked arms; it has a different conformation from HJ DNA in complex with RuvA. In the full resolvosome a probable DNA-RuvA(4)-RuvB(12)-RuvC(2) complex forms which resolves the HJ. The cofactor is Mg(2+).

The protein resides in the cytoplasm. It carries out the reaction Endonucleolytic cleavage at a junction such as a reciprocal single-stranded crossover between two homologous DNA duplexes (Holliday junction).. In terms of biological role, the RuvA-RuvB-RuvC complex processes Holliday junction (HJ) DNA during genetic recombination and DNA repair. Endonuclease that resolves HJ intermediates. Cleaves cruciform DNA by making single-stranded nicks across the HJ at symmetrical positions within the homologous arms, yielding a 5'-phosphate and a 3'-hydroxyl group; requires a central core of homology in the junction. The consensus cleavage sequence is 5'-(A/T)TT(C/G)-3'. Cleavage occurs on the 3'-side of the TT dinucleotide at the point of strand exchange. HJ branch migration catalyzed by RuvA-RuvB allows RuvC to scan DNA until it finds its consensus sequence, where it cleaves and resolves the cruciform DNA. The chain is Crossover junction endodeoxyribonuclease RuvC from Actinobacillus pleuropneumoniae serotype 5b (strain L20).